The chain runs to 138 residues: Large ribosomal subunit protein bL19 (138 aa).

It belongs to the bacterial ribosomal protein bL19 family.

In terms of biological role, this protein is located at the 30S-50S ribosomal subunit interface and may play a role in the structure and function of the aminoacyl-tRNA binding site. The sequence is that of Large ribosomal subunit protein bL19 (rplS) from Rickettsia prowazekii (strain Madrid E).